The sequence spans 224 residues: Redox-sensing transcriptional repressor Rex (224 aa).

A DNA-binding region (H-T-H motif) is located at residues arginine 17–phenylalanine 56. NAD(+) is bound at residue glycine 91–glycine 96.

It belongs to the transcriptional regulatory Rex family. Homodimer.

The protein localises to the cytoplasm. Its function is as follows. Modulates transcription in response to changes in cellular NADH/NAD(+) redox state. This Caldanaerobacter subterraneus subsp. tengcongensis (strain DSM 15242 / JCM 11007 / NBRC 100824 / MB4) (Thermoanaerobacter tengcongensis) protein is Redox-sensing transcriptional repressor Rex.